A 301-amino-acid polypeptide reads, in one-letter code: Phosphoglycolate phosphatase 2 (301 aa).

Asp19 acts as the Nucleophile in catalysis.

The protein belongs to the HAD-like hydrolase superfamily. CbbY/CbbZ/Gph/YieH family.

It catalyses the reaction 2-phosphoglycolate + H2O = glycolate + phosphate. Functionally, dephosphorylates 2-phosphoglycolate, but does not contribute to photorespiratory metabolism. The protein is Phosphoglycolate phosphatase 2 (PGLP2) of Arabidopsis thaliana (Mouse-ear cress).